The following is a 74-amino-acid chain: Brevinin-2MT1 (74 aa).

Positions 1-22 (MFTMKKSLLVLFFLGTISLSLC) are cleaved as a signal peptide. Residues 23-39 (EEERNADEDDGEMTEEE) constitute a propeptide, removed in mature form. Cysteine 68 and cysteine 74 are disulfide-bonded.

This sequence belongs to the frog skin active peptide (FSAP) family. Brevinin subfamily. Expressed by the skin glands.

The protein localises to the secreted. Antimicrobial peptide. Active against a variety of Gram-negative and Gram-positive bacterial strains. Active against fungi. Shows hemolytic activity against human erythrocytes. The chain is Brevinin-2MT1 from Amolops mantzorum (Sichuan torrent frog).